The sequence spans 228 residues: Probable calcium-binding protein CML48 (228 aa).

EF-hand domains follow at residues 52 to 87 and 121 to 156; these read ETHPEIVRSFESADRNRSGFLEESELRQALSLSGYD and NCLAQWRAIFNRYDRDRSGKMNSTQLRDAFYNLGCV. Ca(2+) contacts are provided by Asp-65, Asn-67, Ser-69, and Glu-76.

Functionally, potential calcium sensor. This is Probable calcium-binding protein CML48 (CML48) from Arabidopsis thaliana (Mouse-ear cress).